An 862-amino-acid polypeptide reads, in one-letter code: Eukaryotic translation initiation factor 3 subunit C (862 aa).

The interval 1-81 (MSSRFFYGGG…EEEEKVTVVK (81 aa)) is disordered. The span at 17–54 (SSDEEELYSDREEEEKSEEEESSEEEDETSEEEESDEE) shows a compositional bias: acidic residues. The segment covering 55–65 (TGARKFLKDVA) has biased composition (basic and acidic residues). A compositionally biased stretch (acidic residues) spans 66 to 75 (SDSEEEEEEE). The region spanning 600 to 774 (FHMHINLELL…NAIVFRKGVE (175 aa)) is the PCI domain. A disordered region spans residues 813-862 (RDQGAGARGGRGSGRGGQARGGPRFPGGQQGRRPGGQQFGGGALGGAIKA). Residues 818–862 (GARGGRGSGRGGQARGGPRFPGGQQGRRPGGQQFGGGALGGAIKA) show a composition bias toward gly residues.

Belongs to the eIF-3 subunit C family. Component of the eukaryotic translation initiation factor 3 (eIF-3) complex.

It is found in the cytoplasm. Functionally, component of the eukaryotic translation initiation factor 3 (eIF-3) complex, which is involved in protein synthesis of a specialized repertoire of mRNAs and, together with other initiation factors, stimulates binding of mRNA and methionyl-tRNAi to the 40S ribosome. The eIF-3 complex specifically targets and initiates translation of a subset of mRNAs involved in cell proliferation. The sequence is that of Eukaryotic translation initiation factor 3 subunit C (nip1) from Aspergillus fumigatus (strain CBS 144.89 / FGSC A1163 / CEA10) (Neosartorya fumigata).